A 644-amino-acid chain; its full sequence is MDNDGPRSMTIGDDFQENFCERLERIHNTLHSINDCNSLNESTTSISETLLVQFYDDLENVASVIPDLVNKKRLGKDDILLFMDWLLLKKYMLYQFISDVHNIEEGFAHLLDLLEDEFSKDDQDSDKYNRFSPMFDVIEESTQIKTQLEPWLTNLKELLDTSLEFNEISKDHMDTLHKIINSNISYCLEIQEERFASPIRHTPSFTLEQLVKLLGTHTETTEPKVPKFSPAEDILSRKFLNLKKNIPPIEKSLTDILPQRIVQFGHRNITNITTLQTILQKKYELIMKDYRFMNSEFRELKVELIDKRWNILFINLNHELLYILDEIERLQSKLLTTKYTKDITIRLERQLERKSKTVSKTFNIIYRALEFSLLDAGVASKTNELAQRWLNIKPTADKILIKSSASNKIATSKKKIPKPKSLGFGRPNSVIGTITQDFQERVAINEGDSNKTPENSTTVALKGKKLGKALLQKMNIKPATSPNSSNAINPFFDPESPNKGKLILSSVPPLPYDETDETTLRVSRGENEKSPDSFITSRHENKVQITETPLMAKNKSVLDIEKDKWNHYRSLPSRIPIYKDKVVKVTVENTPIAKVFQTPPTKITTPNSQVWVPSTRRRTRLRPPTPLSQLLSPREGRLDKTPTY.

S496 bears the Phosphoserine mark. 2 disordered regions span residues 506-534 (SVPP…PDSF) and 606-644 (PNSQ…TPTY). Composition is skewed to basic and acidic residues over residues 523–534 (SRGENEKSPDSF) and 634–644 (REGRLDKTPTY).

It localises to the nucleus. Its subcellular location is the cytoplasm. The protein localises to the cytoskeleton. Its function is as follows. Involved in karyogamy. Component of a cortical adaptor complex that orients cytoplasmic microtubules. It may be involved in anchoring cytoplasmic microtubules to the cell cortex. This is Karyogamy protein KAR9 (KAR9) from Saccharomyces cerevisiae (strain ATCC 204508 / S288c) (Baker's yeast).